A 271-amino-acid chain; its full sequence is Type III pantothenate kinase (271 aa).

6–13 (DVRNTHTV) provides a ligand contact to ATP. Position 109-112 (109-112 (GADR)) interacts with substrate. The Proton acceptor role is filled by D111. A K(+)-binding site is contributed by D131. Residue S134 participates in ATP binding. T186 contributes to the substrate binding site.

Belongs to the type III pantothenate kinase family. Homodimer. Requires NH4(+) as cofactor. K(+) is required as a cofactor.

The protein localises to the cytoplasm. It carries out the reaction (R)-pantothenate + ATP = (R)-4'-phosphopantothenate + ADP + H(+). It functions in the pathway cofactor biosynthesis; coenzyme A biosynthesis; CoA from (R)-pantothenate: step 1/5. Functionally, catalyzes the phosphorylation of pantothenate (Pan), the first step in CoA biosynthesis. This chain is Type III pantothenate kinase, found in Mycobacterium avium (strain 104).